A 103-amino-acid chain; its full sequence is Large ribosomal subunit protein bL21 (103 aa).

It belongs to the bacterial ribosomal protein bL21 family. In terms of assembly, part of the 50S ribosomal subunit. Contacts protein L20.

Functionally, this protein binds to 23S rRNA in the presence of protein L20. The chain is Large ribosomal subunit protein bL21 from Erwinia tasmaniensis (strain DSM 17950 / CFBP 7177 / CIP 109463 / NCPPB 4357 / Et1/99).